The sequence spans 744 residues: Catalase A (744 aa).

Active-site residues include histidine 93 and asparagine 166. Position 380 (tyrosine 380) interacts with heme.

Belongs to the catalase family. Requires heme as cofactor.

The protein resides in the peroxisome matrix. The catalysed reaction is 2 H2O2 = O2 + 2 H2O. In terms of biological role, catalyzes the degradation of hydrogen peroxide (H(2)O(2)) generated by peroxisomal oxidases to water and oxygen, thereby protecting cells from the toxic effects of hydrogen peroxide. In Emericella nidulans (strain FGSC A4 / ATCC 38163 / CBS 112.46 / NRRL 194 / M139) (Aspergillus nidulans), this protein is Catalase A (catA).